The primary structure comprises 212 residues: MRKVLLTGFEPFGGESINPSLELVKQMASRALPQVEIIGCEVPVVRYQAIETVLQAVETHQPDLVLMIGQASGRCAITPERVAINLDDYRIEDNAGHQPVDEPIIATGPAAYFSTLPVKAITHALQQAGIPCQLSHSAGTFVCNHLFYGVQHHLHTRAIRSGFIHIPLLPEQASASNQPSMSLETLVHGLEMMMMTCLETEQDTKHTGGTIC.

Catalysis depends on residues E80, C143, and H165.

Belongs to the peptidase C15 family. Homotetramer.

Its subcellular location is the cytoplasm. The enzyme catalyses Release of an N-terminal pyroglutamyl group from a polypeptide, the second amino acid generally not being Pro.. Functionally, removes 5-oxoproline from various penultimate amino acid residues except L-proline. The protein is Pyrrolidone-carboxylate peptidase of Vibrio vulnificus (strain CMCP6).